Here is a 194-residue protein sequence, read N- to C-terminus: MTAIQLIVGLGNPGPEYEQTRHNAGALFVERLASAQRVSLTADKKYFGLTAKFSHQGNDVRLLIPTTYMNRSGQSVAALANFFRIKPEAILVAHDELDLPPGVAKLKRGGGHGGHNGLRDIIAQLGNQNDFHRLRLGIGHPGDAKLVSNFVLGRAPRAEQEKLDASIDFALGVMPDVLAGDFAKAMRELHCQKA.

Tyr-17 is a binding site for tRNA. His-22 (proton acceptor) is an active-site residue. Tyr-68, Asn-70, and Asn-116 together coordinate tRNA.

Belongs to the PTH family. In terms of assembly, monomer.

It is found in the cytoplasm. It catalyses the reaction an N-acyl-L-alpha-aminoacyl-tRNA + H2O = an N-acyl-L-amino acid + a tRNA + H(+). In terms of biological role, hydrolyzes ribosome-free peptidyl-tRNAs (with 1 or more amino acids incorporated), which drop off the ribosome during protein synthesis, or as a result of ribosome stalling. Functionally, catalyzes the release of premature peptidyl moieties from peptidyl-tRNA molecules trapped in stalled 50S ribosomal subunits, and thus maintains levels of free tRNAs and 50S ribosomes. The sequence is that of Peptidyl-tRNA hydrolase from Pseudomonas entomophila (strain L48).